Here is a 782-residue protein sequence, read N- to C-terminus: Coiled-coil alpha-helical rod protein 1 (782 aa).

Basic and acidic residues-rich tracts occupy residues 62–74 (ERDV…EPGR) and 208–218 (ETRRAGEAKEL). 2 disordered regions span residues 62–82 (ERDV…WGLE) and 182–218 (LTQA…AKEL). Coiled-coil stretches lie at residues 82–314 (EGSQ…ELTR), 344–437 (LMVQ…NAVS), and 498–691 (VADV…QQEG).

It localises to the cytoplasm. The protein resides in the nucleus. In terms of biological role, may be a regulator of keratinocyte proliferation or differentiation. This Pan paniscus (Pygmy chimpanzee) protein is Coiled-coil alpha-helical rod protein 1 (CCHCR1).